Consider the following 1228-residue polypeptide: DNA-directed RNA polymerase subunit beta (1228 aa).

It belongs to the RNA polymerase beta chain family. As to quaternary structure, the RNAP catalytic core consists of 2 alpha, 1 beta, 1 beta' and 1 omega subunit. When a sigma factor is associated with the core the holoenzyme is formed, which can initiate transcription.

The catalysed reaction is RNA(n) + a ribonucleoside 5'-triphosphate = RNA(n+1) + diphosphate. Functionally, DNA-dependent RNA polymerase catalyzes the transcription of DNA into RNA using the four ribonucleoside triphosphates as substrates. In Leptospira biflexa serovar Patoc (strain Patoc 1 / Ames), this protein is DNA-directed RNA polymerase subunit beta.